The primary structure comprises 132 residues: Global transcriptional regulator Spx (132 aa).

A disulfide bridge links C10 with C13.

Belongs to the ArsC family. Spx subfamily. As to quaternary structure, interacts with the C-terminal domain of the alpha subunit of the RNAP.

The protein resides in the cytoplasm. In terms of biological role, global transcriptional regulator that plays a key role in stress response and exerts either positive or negative regulation of genes. Acts by interacting with the C-terminal domain of the alpha subunit of the RNA polymerase (RNAP). This interaction can enhance binding of RNAP to the promoter region of target genes and stimulate their transcription, or block interaction of RNAP with activator. This chain is Global transcriptional regulator Spx, found in Enterococcus faecalis (strain ATCC 700802 / V583).